We begin with the raw amino-acid sequence, 245 residues long: Fibroblast growth factor-binding protein 3 (245 aa).

The N-terminal stretch at 1 to 28 (MSPPRPRASLSPLTLLLLLGGCLLSAAG) is a signal peptide. Residues 33–52 (AAGREVTRASRPTVGSSGRF) are disordered. Disulfide bonds link Cys60-Cys81 and Cys91-Cys125. Residues 136–216 (CARKTAGSDL…PAAAGFQPNG (81 aa)) form a disordered region. Residues 170-180 (RSRQSVRSPSS) show a composition bias toward low complexity. Residues Cys228 and Cys236 are joined by a disulfide bond.

This sequence belongs to the fibroblast growth factor-binding protein family. Interacts with FGF2. In the adult, highly expressed in brain with lower levels in ovary. In the embryo, highest levels are found in the brain and spinal cord at 14 dpc and expression is almost completely restricted to the brain by 18 dpc. In the adult and postnatal brain, highly expressed in the orbitofrontal cortex where it is concentrated primarily in differentiated neurons.

It is found in the secreted. Heparin-binding protein which binds to FGF2, prevents binding of FGF2 to heparin and probably inhibits immobilization of FGF2 on extracellular matrix glycosaminoglycans, allowing its release and subsequent activation of FGFR signaling which leads to increased vascular permeability. This is Fibroblast growth factor-binding protein 3 (Fgfbp3) from Mus musculus (Mouse).